A 305-amino-acid polypeptide reads, in one-letter code: Olfactory receptor 5M11 (305 aa).

Over 1-25 (MSNTNGSAITEFILLGLTDCPELQS) the chain is Extracellular. Asn-5 carries N-linked (GlcNAc...) asparagine glycosylation. The chain crosses the membrane as a helical span at residues 26–46 (LLFVLFLVVYLVTLLGNLGMI). Residues 47–54 (MLMRLDSR) are Cytoplasmic-facing. The chain crosses the membrane as a helical span at residues 55–75 (LHTPMYFFLTNLAFVDLCYTS). Over 76–98 (NATPQMSTNIVSEKTISFAGCFT) the chain is Extracellular. A disulfide bridge links Cys-96 with Cys-188. The helical transmembrane segment at 99–119 (QCYIFIALLLTEFYMLAAMAY) threads the bilayer. At 120-138 (DRYVAIYDPLRYSVKTSRR) the chain is on the cytoplasmic side. Residues 139–159 (VCICLATFPYVYGFSDGLFQA) traverse the membrane as a helical segment. Residues 160–195 (ILTFRLTFCRSSVINHFYCADPPLIKLSCSDTYVKE) are Extracellular-facing. Residues 196-216 (HAMFISAGFNLSSSLTIVLVS) traverse the membrane as a helical segment. The Cytoplasmic segment spans residues 217–236 (YAFILAAILRIKSAEGRHKA). Residues 237-257 (FSTCGSHMMAVTLFYGTLFCM) traverse the membrane as a helical segment. Residues 258 to 270 (YIRPPTDKTVEES) lie on the Extracellular side of the membrane. A helical transmembrane segment spans residues 271-291 (KIIAVFYTFVSPVLNPLIYSL). Topologically, residues 292-305 (RNKDVKQALKNVLR) are cytoplasmic.

This sequence belongs to the G-protein coupled receptor 1 family.

It localises to the cell membrane. Functionally, odorant receptor. The polypeptide is Olfactory receptor 5M11 (OR5M11) (Homo sapiens (Human)).